The following is a 236-amino-acid chain: Lipoprotein signal peptidase (236 aa).

The next 4 membrane-spanning stretches (helical) occupy residues Phe8–Phe28, Trp44–Thr64, Val68–Leu88, and Leu98–Phe118. Residues Asp141 and Asp174 contribute to the active site. A helical membrane pass occupies residues Cys166 to Leu186.

It belongs to the peptidase A8 family.

The protein localises to the cell inner membrane. The enzyme catalyses Release of signal peptides from bacterial membrane prolipoproteins. Hydrolyzes -Xaa-Yaa-Zaa-|-(S,diacylglyceryl)Cys-, in which Xaa is hydrophobic (preferably Leu), and Yaa (Ala or Ser) and Zaa (Gly or Ala) have small, neutral side chains.. It functions in the pathway protein modification; lipoprotein biosynthesis (signal peptide cleavage). Functionally, this protein specifically catalyzes the removal of signal peptides from prolipoproteins. The chain is Lipoprotein signal peptidase from Amoebophilus asiaticus (strain 5a2).